Reading from the N-terminus, the 342-residue chain is Glycerol-3-phosphate dehydrogenase [NAD(P)+] (342 aa).

Positions 11, 31, and 102 each coordinate NADPH. Sn-glycerol 3-phosphate is bound by residues Lys102 and Gly132. Ala136 serves as a coordination point for NADPH. Positions 187, 240, 250, 251, and 252 each coordinate sn-glycerol 3-phosphate. Lys187 functions as the Proton acceptor in the catalytic mechanism. Residue Arg251 coordinates NADPH. Glu277 contributes to the NADPH binding site.

The protein belongs to the NAD-dependent glycerol-3-phosphate dehydrogenase family.

The protein localises to the cytoplasm. The catalysed reaction is sn-glycerol 3-phosphate + NAD(+) = dihydroxyacetone phosphate + NADH + H(+). It carries out the reaction sn-glycerol 3-phosphate + NADP(+) = dihydroxyacetone phosphate + NADPH + H(+). The protein operates within membrane lipid metabolism; glycerophospholipid metabolism. Its function is as follows. Catalyzes the reduction of the glycolytic intermediate dihydroxyacetone phosphate (DHAP) to sn-glycerol 3-phosphate (G3P), the key precursor for phospholipid synthesis. This is Glycerol-3-phosphate dehydrogenase [NAD(P)+] from Symbiobacterium thermophilum (strain DSM 24528 / JCM 14929 / IAM 14863 / T).